The following is a 314-amino-acid chain: Tyrosine recombinase XerC (314 aa).

The 85-residue stretch at 1 to 85 folds into the Core-binding (CB) domain; it reads MNEQVEAFLR…AVKSFFTFLT (85 aa). Positions 106-291 constitute a Tyr recombinase domain; it reads DLPRALTPRQ…NHESSHTPHA (186 aa). Residues R147, K171, H243, R246, and H269 contribute to the active site. Y278 functions as the O-(3'-phospho-DNA)-tyrosine intermediate in the catalytic mechanism. Residues 284–314 are disordered; the sequence is ESSHTPHAHPAPRASEVNGVRDEQALVPEEK. A compositionally biased stretch (basic and acidic residues) spans 302–314; that stretch reads GVRDEQALVPEEK.

Belongs to the 'phage' integrase family. XerC subfamily. Forms a cyclic heterotetrameric complex composed of two molecules of XerC and two molecules of XerD.

The protein localises to the cytoplasm. Functionally, site-specific tyrosine recombinase, which acts by catalyzing the cutting and rejoining of the recombining DNA molecules. The XerC-XerD complex is essential to convert dimers of the bacterial chromosome into monomers to permit their segregation at cell division. It also contributes to the segregational stability of plasmids. This is Tyrosine recombinase XerC from Roseiflexus castenholzii (strain DSM 13941 / HLO8).